The sequence spans 91 residues: Small ribosomal subunit protein uS19 (91 aa).

The segment at 72–91 (GEFSPTRTYTGHGSEKGKKK) is disordered.

This sequence belongs to the universal ribosomal protein uS19 family.

In terms of biological role, protein S19 forms a complex with S13 that binds strongly to the 16S ribosomal RNA. This is Small ribosomal subunit protein uS19 from Mycoplasma mobile (strain ATCC 43663 / 163K / NCTC 11711) (Mesomycoplasma mobile).